The primary structure comprises 589 residues: Protein MICRORCHIDIA 3 (589 aa).

Residues 1-33 (MAPESKNAGVSVVVNLDSDSDSDNDDGVGGRGA) form a disordered region. Residues 542–589 (MRCEEYVKKETELEQTVSNLAKELEETKSKCARLALLVDAKRREMQQV) are a coiled coil.

The protein belongs to the MORC ATPase protein family. In terms of assembly, homodimer and heterodimer. Component of an RNA-directed DNA methylation (RdDM) complex. It depends on Mg(2+) as a cofactor. The cofactor is Mn(2+).

The protein localises to the nucleus. Functionally, exhibits ATPase activity. Binds DNA/RNA in a non-specific manner and exhibits endonuclease activity. Probably involved in DNA repair. Involved in RNA-directed DNA methylation (RdDM) as a component of the RdDM machinery and required for gene silencing. May also be involved in the regulation of chromatin architecture to maintain gene silencing. The protein is Protein MICRORCHIDIA 3 of Arabidopsis thaliana (Mouse-ear cress).